The sequence spans 239 residues: Small ribosomal subunit protein uS3 (239 aa).

In terms of domain architecture, KH type-2 spans 38–106 (IRELIEERFK…KTFVNVVEIK (69 aa)).

It belongs to the universal ribosomal protein uS3 family. In terms of assembly, part of the 30S ribosomal subunit. Forms a tight complex with proteins S10 and S14.

Its function is as follows. Binds the lower part of the 30S subunit head. Binds mRNA in the 70S ribosome, positioning it for translation. This Elusimicrobium minutum (strain Pei191) protein is Small ribosomal subunit protein uS3.